Reading from the N-terminus, the 293-residue chain is Formamidopyrimidine-DNA glycosylase (293 aa).

The active-site Schiff-base intermediate with DNA is P2. Catalysis depends on E3, which acts as the Proton donor. K58 acts as the Proton donor; for beta-elimination activity in catalysis. 3 residues coordinate DNA: H104, R123, and K166. The segment at 257–293 (AVYDREGERCRTPGCNGTVKRLVQNGRSTFWCSGCQT) adopts an FPG-type zinc-finger fold. The active-site Proton donor; for delta-elimination activity is R283.

Belongs to the FPG family. Monomer. It depends on Zn(2+) as a cofactor.

The catalysed reaction is Hydrolysis of DNA containing ring-opened 7-methylguanine residues, releasing 2,6-diamino-4-hydroxy-5-(N-methyl)formamidopyrimidine.. It catalyses the reaction 2'-deoxyribonucleotide-(2'-deoxyribose 5'-phosphate)-2'-deoxyribonucleotide-DNA = a 3'-end 2'-deoxyribonucleotide-(2,3-dehydro-2,3-deoxyribose 5'-phosphate)-DNA + a 5'-end 5'-phospho-2'-deoxyribonucleoside-DNA + H(+). In terms of biological role, involved in base excision repair of DNA damaged by oxidation or by mutagenic agents. Acts as a DNA glycosylase that recognizes and removes damaged bases. Has a preference for oxidized purines, such as 7,8-dihydro-8-oxoguanine (8-oxoG). Has AP (apurinic/apyrimidinic) lyase activity and introduces nicks in the DNA strand. Cleaves the DNA backbone by beta-delta elimination to generate a single-strand break at the site of the removed base with both 3'- and 5'-phosphates. The protein is Formamidopyrimidine-DNA glycosylase of Rhodopseudomonas palustris (strain HaA2).